A 260-amino-acid chain; its full sequence is Cytosolic Fe-S cluster assembly factor Nubp2 homolog (260 aa).

14–21 (GKGGVGKS) provides a ligand contact to ATP. [4Fe-4S] cluster is bound by residues cysteine 188 and cysteine 191.

The protein belongs to the Mrp/NBP35 ATP-binding proteins family. NUBP2/CFD1 subfamily. Heterotetramer of 2 Nubp1 and 2 Nubp2 chains. [4Fe-4S] cluster serves as cofactor.

The protein resides in the cytoplasm. Its function is as follows. Component of the cytosolic iron-sulfur (Fe/S) protein assembly (CIA) machinery. Required for maturation of extramitochondrial Fe-S proteins. The Nubp1-Nubp2 heterotetramer forms a Fe-S scaffold complex, mediating the de novo assembly of an Fe-S cluster and its transfer to target apoproteins. This chain is Cytosolic Fe-S cluster assembly factor Nubp2 homolog, found in Drosophila simulans (Fruit fly).